We begin with the raw amino-acid sequence, 376 residues long: Biotin synthase (376 aa).

The Radical SAM core domain occupies 68–292 (NEVQISTLLS…IAVTRICCPS (225 aa)). [4Fe-4S] cluster is bound by residues Cys83, Cys87, and Cys90. [2Fe-2S] cluster-binding residues include Cys129, Cys160, Cys220, and Arg296.

This sequence belongs to the radical SAM superfamily. Biotin synthase family. In terms of assembly, homodimer. [4Fe-4S] cluster serves as cofactor. The cofactor is [2Fe-2S] cluster.

It carries out the reaction (4R,5S)-dethiobiotin + (sulfur carrier)-SH + 2 reduced [2Fe-2S]-[ferredoxin] + 2 S-adenosyl-L-methionine = (sulfur carrier)-H + biotin + 2 5'-deoxyadenosine + 2 L-methionine + 2 oxidized [2Fe-2S]-[ferredoxin]. It participates in cofactor biosynthesis; biotin biosynthesis; biotin from 7,8-diaminononanoate: step 2/2. Catalyzes the conversion of dethiobiotin (DTB) to biotin by the insertion of a sulfur atom into dethiobiotin via a radical-based mechanism. This chain is Biotin synthase, found in Psychrobacter cryohalolentis (strain ATCC BAA-1226 / DSM 17306 / VKM B-2378 / K5).